The primary structure comprises 314 residues: Atrochrysone carboxyl ACP thioesterase AgnL7 (314 aa).

The Zn(2+) site is built by His-103, His-105, Asp-107, and His-108. Asp-107 functions as the Proton donor/acceptor in the catalytic mechanism.

Belongs to the metallo-beta-lactamase superfamily. Zn(2+) is required as a cofactor.

The catalysed reaction is atrochrysone carboxyl-[ACP] + H2O = atrochrysone carboxylate + holo-[ACP] + H(+). It participates in secondary metabolite biosynthesis. Functionally, atrochrysone carboxyl ACP thioesterase; part of the gene cluster that mediates the biosynthesis of agnestins, dihydroxy-xanthone metabolites. The pathway begins with the assembly and cyclization of atrochrysone thioester by the non-reducing polyketide synthase Agnpks1. The atrochrysone carboxyl ACP thioesterase AgnL7 then breaks the thioester bond and releases the atrochrysone carboxylic acid as the first enzyme-free intermediate. The decarboxylase AgnL1 then catalyzes the concerted decarboxylation-elimination required to convert atochrysone carboxylic acid into emodin anthrone, which is further oxidized to emodin by the anthrone oxygenase AgnL2. Emodin then undergoes reduction catalyzed by the oxidoreductase AgnL4 to yield the dihydroquinone tautomer which is the substrate for reduction by the short chain dehydrogenase AgnL6 reduction to produce hydroxyketone, followed by AgnL8 dehydration and likely spontaneous autoxidation to chrysophanol. Baeyer-Villiger oxidation by the oxidase AgnL3 leads to monodictyphenone via cleavage of the C-10/C-10a bond of chrysophanol. Alternative cleavage at the C-4a/C-10 bond of chrysophanol also leads to the formation some cephalone F. Further conversion to agnestins A and B, requires reduction to dihydro-monodictyphenone, oxidation to agnestin C probably via an epoxide, and rearrangement to either agnestin A or agnestin B directly, although agnestin A or agnestin B can also interconvert. Within the cluster, AgnR1 is the only unassigned oxidoreductase present which could be involved in this conversion. However, AgnR1 seems not to be involved in this step, and thus genes involved in the proposed oxidation/reduction may be located elsewhere on the genome. Further agnestin A derivatives are probably formed by spontaneous decarboxylations, dehydrations and methanolysis reactions. The chain is Atrochrysone carboxyl ACP thioesterase AgnL7 from Paecilomyces divaricatus (Penicillium divaricatum).